The chain runs to 319 residues: Probable alcohol dehydrogenase (319 aa).

The Zn(2+) site is built by Cys18, His39, Cys68, Cys71, Cys74, Cys82, and Cys149.

This sequence belongs to the zinc-containing alcohol dehydrogenase family. The cofactor is Zn(2+).

The catalysed reaction is a primary alcohol + NAD(+) = an aldehyde + NADH + H(+). It carries out the reaction a secondary alcohol + NAD(+) = a ketone + NADH + H(+). In Pseudomonas sp, this protein is Probable alcohol dehydrogenase (terPD).